The primary structure comprises 410 residues: MVLSQRQRDELNRAIADYLRSNGYEEAYSVFKKEAELDMNEELDIKYAGLLEKKWTSVIRLQKKVMELESKLNEAKEEFTSGGPIGQKRDPKEWIPRPPEKYALSGHRSPVTRVIFHPVFSVMVTASEDATIKVWDYETGDFERTLKGHTDSVQDISFDHSGKLLASCSADMTIKLWDFQGFECLRTMHGHDHNVSSVAIMPNGDHIVSASRDKTIKMWEVQTGYCVKTFTGHREWVRMVRPNQDGTLIASCSNDQTVRVWVVATKECKAELREHEHVVECISWAPESSYSTISDATGSETKRSGKPGPFLLSGSRDKTIKMWDISIGMCLMTLVGHDNWVRGVQFHPGGKFILSCADDKTIRIWDYKNKRCMKTLNAHEHFVTSLDFHKTAPYVVTGSVDQTVKVWECR.

The LisH domain occupies 7-39; that stretch reads QRDELNRAIADYLRSNGYEEAYSVFKKEAELDM. Residues 56–82 adopt a coiled-coil conformation; sequence TSVIRLQKKVMELESKLNEAKEEFTSG. WD repeat units lie at residues 106-147, 148-189, 190-229, 232-271, 274-333, 336-377, and 379-410; these read GHRS…RTLK, GHTD…RTMH, GHDHNVSSVAIMPNGDHIVSASRDKTIKMWEVQTGYCVKT, GHREWVRMVRPNQDGTLIASCSNDQTVRVWVVATKECKAE, EHEH…CLMT, GHDN…KTLN, and HEHFVTSLDFHKTAPYVVTGSVDQTVKVWECR.

The protein belongs to the WD repeat LIS1/nudF family. In terms of assembly, can self-associate. Component of the cytosolic PAF-AH (I) heterotetrameric enzyme, which is composed of PAFAH1B1 (beta), PAFAH1B2 (alpha2) and PAFAH1B3 (alpha1) subunits. The catalytic activity of the enzyme resides in the alpha1 (PAFAH1B3) and alpha2 (PAFAH1B2) subunits, whereas the beta subunit (PAFAH1B1) has regulatory activity. Trimer formation is not essential for the catalytic activity. Interacts with dynein, dynactin, nde1 and ndel1.

It localises to the cytoplasm. The protein localises to the cytoskeleton. Its subcellular location is the microtubule organizing center. The protein resides in the centrosome. Regulatory subunit (beta subunit) of the cytosolic type I platelet-activating factor (PAF) acetylhydrolase (PAF-AH (I)), an enzyme that catalyzes the hydrolyze of the acetyl group at the sn-2 position of PAF and its analogs and participates in PAF inactivation. Regulates the PAF-AH (I) activity in a catalytic dimer composition-dependent manner. Positively regulates the activity of the minus-end directed microtubule motor protein dynein. May enhance dynein-mediated microtubule sliding by targeting dynein to the microtubule plus end. Required for several dynein- and microtubule-dependent processes such as the maintenance of Golgi integrity, the peripheral transport of microtubule fragments and the coupling of the nucleus and centrosome. May be required for proliferation of neuronal precursors and neuronal migration. In Xenopus laevis (African clawed frog), this protein is Lissencephaly-1 homolog (pafah1b1).